The primary structure comprises 130 residues: UPF0212 protein TSIB_1358 (130 aa).

Belongs to the UPF0212 family.

This is UPF0212 protein TSIB_1358 from Thermococcus sibiricus (strain DSM 12597 / MM 739).